The sequence spans 290 residues: Small ribosomal subunit biogenesis GTPase RsgA (290 aa).

The CP-type G domain occupies 61 to 218; it reads SSELLRPAVA…IVDTPGFSTL (158 aa). GTP contacts are provided by residues 110–113 and 161–169; these read NKVD and GPSGAGKST. Residues Cys-243, Cys-248, His-250, and Cys-256 each coordinate Zn(2+).

This sequence belongs to the TRAFAC class YlqF/YawG GTPase family. RsgA subfamily. As to quaternary structure, monomer. Associates with 30S ribosomal subunit, binds 16S rRNA. Zn(2+) is required as a cofactor.

Its subcellular location is the cytoplasm. One of several proteins that assist in the late maturation steps of the functional core of the 30S ribosomal subunit. Helps release RbfA from mature subunits. May play a role in the assembly of ribosomal proteins into the subunit. Circularly permuted GTPase that catalyzes slow GTP hydrolysis, GTPase activity is stimulated by the 30S ribosomal subunit. The chain is Small ribosomal subunit biogenesis GTPase RsgA from Clostridium botulinum (strain Eklund 17B / Type B).